Consider the following 304-residue polypeptide: UDP-N-acetylenolpyruvoylglucosamine reductase (304 aa).

The 167-residue stretch at R32 to G198 folds into the FAD-binding PCMH-type domain. The active site involves R177. Catalysis depends on S227, which acts as the Proton donor. Residue E297 is part of the active site.

It belongs to the MurB family. Requires FAD as cofactor.

It is found in the cytoplasm. It catalyses the reaction UDP-N-acetyl-alpha-D-muramate + NADP(+) = UDP-N-acetyl-3-O-(1-carboxyvinyl)-alpha-D-glucosamine + NADPH + H(+). Its pathway is cell wall biogenesis; peptidoglycan biosynthesis. Its function is as follows. Cell wall formation. In Clostridioides difficile (strain 630) (Peptoclostridium difficile), this protein is UDP-N-acetylenolpyruvoylglucosamine reductase.